A 218-amino-acid polypeptide reads, in one-letter code: Adenylate kinase (218 aa).

11 to 16 (GAGKGT) is a binding site for ATP. The segment at 31-60 (STGDMFREAMANKTKVGLEAKSYIDKGNLV) is NMP. AMP-binding positions include threonine 32, arginine 37, 58-60 (NLV), 86-89 (GFPR), and glutamine 93. An LID region spans residues 127-165 (ARYMCKNCGATYNKLSKQPKVEGTCDRCGSHEFYQREDD). Arginine 128 lines the ATP pocket. Zn(2+)-binding residues include cysteine 131 and cysteine 134. 137–138 (TY) contributes to the ATP binding site. Zn(2+) is bound by residues cysteine 151 and cysteine 154. AMP-binding residues include arginine 162 and arginine 173. Glutamine 201 contacts ATP.

This sequence belongs to the adenylate kinase family. In terms of assembly, monomer.

It is found in the cytoplasm. The catalysed reaction is AMP + ATP = 2 ADP. It functions in the pathway purine metabolism; AMP biosynthesis via salvage pathway; AMP from ADP: step 1/1. In terms of biological role, catalyzes the reversible transfer of the terminal phosphate group between ATP and AMP. Plays an important role in cellular energy homeostasis and in adenine nucleotide metabolism. This chain is Adenylate kinase, found in Lactobacillus helveticus (strain DPC 4571).